We begin with the raw amino-acid sequence, 351 residues long: N-acetyl-gamma-glutamyl-phosphate reductase (351 aa).

Residue Cys150 is part of the active site.

The protein belongs to the NAGSA dehydrogenase family. Type 1 subfamily.

The protein resides in the cytoplasm. It catalyses the reaction N-acetyl-L-glutamate 5-semialdehyde + phosphate + NADP(+) = N-acetyl-L-glutamyl 5-phosphate + NADPH + H(+). The protein operates within amino-acid biosynthesis; L-arginine biosynthesis; N(2)-acetyl-L-ornithine from L-glutamate: step 3/4. In terms of biological role, catalyzes the NADPH-dependent reduction of N-acetyl-5-glutamyl phosphate to yield N-acetyl-L-glutamate 5-semialdehyde. This chain is N-acetyl-gamma-glutamyl-phosphate reductase, found in Heliobacterium modesticaldum (strain ATCC 51547 / Ice1).